The chain runs to 312 residues: MKITAKAWAKTNLHLGVGPARDDGFHELMTVFQTIDLFDTVTLTTLDEELVEEGSVVKQLSVTGARGVPEDASNLAWRAVDALVKRRAEKTPLSAVSLHISKGIPVAGGMAGGSADAAATLRAVDAWIGPFGEDTLLEVAAELGSDVPFCLLGGTMRGTGRGEQLVDMLTRGKLHWVVAAMAHGLSTPEVFKKHDELNPESHMDISDLSAALLTGNTAEVGRWLHNDLTSAALSLRPELRSVLQEGIRSGAHAGIVSGSGPTTVFLCESEHKAQDVKEALIDAGQVYAAYTATGPAASTADQRGAHILTVSQ.

Residue Lys10 is part of the active site. Residue 105–115 (PVAGGMAGGSA) participates in ATP binding. Residue Asp146 is part of the active site.

The protein belongs to the GHMP kinase family. IspE subfamily.

The catalysed reaction is 4-CDP-2-C-methyl-D-erythritol + ATP = 4-CDP-2-C-methyl-D-erythritol 2-phosphate + ADP + H(+). It functions in the pathway isoprenoid biosynthesis; isopentenyl diphosphate biosynthesis via DXP pathway; isopentenyl diphosphate from 1-deoxy-D-xylulose 5-phosphate: step 3/6. In terms of biological role, catalyzes the phosphorylation of the position 2 hydroxy group of 4-diphosphocytidyl-2C-methyl-D-erythritol. This chain is 4-diphosphocytidyl-2-C-methyl-D-erythritol kinase, found in Corynebacterium glutamicum (strain R).